We begin with the raw amino-acid sequence, 452 residues long: Chloride/fluoride channel protein (452 aa).

The next 10 membrane-spanning stretches (helical) occupy residues 23–43, 57–77, 97–117, 160–180, 188–208, 222–242, 264–284, 315–337, 344–364, and 386–408; these read WLALAGLVALLAGSASALFLL, WVIWLLPVAGFAVGLAYHLIG, IVPLRMVPMVLIGTVVSHLFG, FASVFGTPLAGALFGLEVLAI, LFPCVVAAIVADQVGQAWGVV, LWSVMAVVAAGIVFGLTGLLF, PFAGGLLIAVAVWALGSNHYI, VFTVVSLGTGFKGGEVTPLFYIG, LAPLLHLPFGMLAGIGFVAVF, and IAPLAAIACIASYLVSGHTGIYH.

The protein belongs to the chloride channel (TC 2.A.49) family.

The protein localises to the cell membrane. Functionally, transports chloride and fluoride with similar efficiency. This chain is Chloride/fluoride channel protein (eriC), found in Pseudomonas syringae pv. tomato (strain ATCC BAA-871 / DC3000).